The sequence spans 247 residues: tRNA pseudouridine synthase A (247 aa).

Asp-53 functions as the Nucleophile in the catalytic mechanism. A substrate-binding site is contributed by Tyr-111.

The protein belongs to the tRNA pseudouridine synthase TruA family. In terms of assembly, homodimer.

It catalyses the reaction uridine(38/39/40) in tRNA = pseudouridine(38/39/40) in tRNA. Functionally, formation of pseudouridine at positions 38, 39 and 40 in the anticodon stem and loop of transfer RNAs. This Bacillus pumilus (strain SAFR-032) protein is tRNA pseudouridine synthase A.